The sequence spans 156 residues: ATP synthase subunit b (156 aa).

Residues 5–25 (LTLIGQAIAFAIFVAFCMKFV) traverse the membrane as a helical segment.

The protein belongs to the ATPase B chain family. As to quaternary structure, F-type ATPases have 2 components, F(1) - the catalytic core - and F(0) - the membrane proton channel. F(1) has five subunits: alpha(3), beta(3), gamma(1), delta(1), epsilon(1). F(0) has three main subunits: a(1), b(2) and c(10-14). The alpha and beta chains form an alternating ring which encloses part of the gamma chain. F(1) is attached to F(0) by a central stalk formed by the gamma and epsilon chains, while a peripheral stalk is formed by the delta and b chains.

The protein localises to the cell inner membrane. F(1)F(0) ATP synthase produces ATP from ADP in the presence of a proton or sodium gradient. F-type ATPases consist of two structural domains, F(1) containing the extramembraneous catalytic core and F(0) containing the membrane proton channel, linked together by a central stalk and a peripheral stalk. During catalysis, ATP synthesis in the catalytic domain of F(1) is coupled via a rotary mechanism of the central stalk subunits to proton translocation. Its function is as follows. Component of the F(0) channel, it forms part of the peripheral stalk, linking F(1) to F(0). The protein is ATP synthase subunit b of Acinetobacter baylyi (strain ATCC 33305 / BD413 / ADP1).